The sequence spans 135 residues: Adult cuticle protein 1 (135 aa).

The N-terminal stretch at 1–19 is a signal peptide; that stretch reads MKFAVAVIFTLALAMGVQS. A run of 3 repeats spans residues 72-75, 78-81, and 128-131.

In terms of tissue distribution, detected in the epidermis underlying the head and thorax (including legs and wings), but not in the abdominal epidermis of newly eclosed flies.

Its function is as follows. Component of the cuticle of the adult fruit fly. Could be involved in thickening of the hard adult cuticle. The chain is Adult cuticle protein 1 (Acp1) from Drosophila melanogaster (Fruit fly).